The chain runs to 240 residues: tRNA1(Val) (adenine(37)-N6)-methyltransferase (240 aa).

Belongs to the methyltransferase superfamily. tRNA (adenine-N(6)-)-methyltransferase family.

Its subcellular location is the cytoplasm. It catalyses the reaction adenosine(37) in tRNA1(Val) + S-adenosyl-L-methionine = N(6)-methyladenosine(37) in tRNA1(Val) + S-adenosyl-L-homocysteine + H(+). Functionally, specifically methylates the adenine in position 37 of tRNA(1)(Val) (anticodon cmo5UAC). The sequence is that of tRNA1(Val) (adenine(37)-N6)-methyltransferase from Photobacterium profundum (strain SS9).